Here is a 501-residue protein sequence, read N- to C-terminus: Cyclin-dependent kinase 19 (501 aa).

Met-1 is subject to N-acetylmethionine. A Protein kinase domain is found at 21–335; that stretch reads EYEGCKVGRG…SEQALQDPYF (315 aa). ATP-binding positions include 27–35 and Lys-52; that span reads VGRGTYGHV. Asp-151 acts as the Proton acceptor in catalysis. The disordered stretch occupies residues 362 to 501; the sequence is DEPEEKGDKN…YHSSHQTHRY (140 aa). Positions 371–392 are enriched in low complexity; sequence NQPQQQNPHQQPAAPAQQTAAP. Gly residues predominate over residues 408–421; that stretch reads TAGGATAGGGGAGA. Ser-449 carries the post-translational modification Phosphoserine. Residues 467–495 are compositionally biased toward low complexity; sequence YQSSVQGSSQSQSTLGYSSSQQSTQYHSS.

It belongs to the protein kinase superfamily. CMGC Ser/Thr protein kinase family. CDC2/CDKX subfamily.

It localises to the cytoplasm. Its subcellular location is the perinuclear region. The protein localises to the nucleus. It carries out the reaction L-seryl-[protein] + ATP = O-phospho-L-seryl-[protein] + ADP + H(+). The enzyme catalyses L-threonyl-[protein] + ATP = O-phospho-L-threonyl-[protein] + ADP + H(+). The protein is Cyclin-dependent kinase 19 (Cdk19) of Mus musculus (Mouse).